We begin with the raw amino-acid sequence, 493 residues long: Cobyric acid synthase (493 aa).

In terms of domain architecture, GATase cobBQ-type spans 261–455 (HTRIAVVAYP…LHGLFEDAAV (195 aa)). C342 serves as the catalytic Nucleophile. H447 is an active-site residue.

The protein belongs to the CobB/CobQ family. CobQ subfamily.

It participates in cofactor biosynthesis; adenosylcobalamin biosynthesis. Its function is as follows. Catalyzes amidations at positions B, D, E, and G on adenosylcobyrinic A,C-diamide. NH(2) groups are provided by glutamine, and one molecule of ATP is hydrogenolyzed for each amidation. The sequence is that of Cobyric acid synthase from Acidovorax sp. (strain JS42).